A 160-amino-acid chain; its full sequence is ATP synthase subunit b (160 aa).

A helical transmembrane segment spans residues 15–35 (LVIVIGLLFWFLRGFLGGILE).

The protein belongs to the ATPase B chain family. As to quaternary structure, F-type ATPases have 2 components, F(1) - the catalytic core - and F(0) - the membrane proton channel. F(1) has five subunits: alpha(3), beta(3), gamma(1), delta(1), epsilon(1). F(0) has four main subunits: a(1), b(1), b'(1) and c(10-14). The alpha and beta chains form an alternating ring which encloses part of the gamma chain. F(1) is attached to F(0) by a central stalk formed by the gamma and epsilon chains, while a peripheral stalk is formed by the delta, b and b' chains.

It localises to the cellular thylakoid membrane. F(1)F(0) ATP synthase produces ATP from ADP in the presence of a proton or sodium gradient. F-type ATPases consist of two structural domains, F(1) containing the extramembraneous catalytic core and F(0) containing the membrane proton channel, linked together by a central stalk and a peripheral stalk. During catalysis, ATP synthesis in the catalytic domain of F(1) is coupled via a rotary mechanism of the central stalk subunits to proton translocation. Functionally, component of the F(0) channel, it forms part of the peripheral stalk, linking F(1) to F(0). The polypeptide is ATP synthase subunit b (Synechococcus sp. (strain CC9605)).